Reading from the N-terminus, the 352-residue chain is MEGISIYTSDNYTEEIGSGDYDSIKEPCFREENAHFNRIFLPTIYSIIFLTGIVGNGLVILVMGYQKKLRSMTDKYRLHLSVADLLFVITLPFWAVDAVANWYFGKFLCKAVHVIYTVNLYSSVLILAFISLDRYLAIVHATNSQRPRKLLAEKVVYVGVWIPALLLTIPDFIFANVSEADDRYICDRFYPNDLWVVVFQFQHIMVGLILPGIVILSCYCIIISKLSHSKGHQKRKALKTTVILILAFFACWLPYYIGISIDSFILLEIIRQGCEFENTVHKWISITEALAFFHCCLNPILYAFLGAKFKTSAQHALTSVSRGSSLKILSKGKRGGHSSVSTESESSSFHSS.

An important for chemokine binding and signaling region spans residues 1-21; that stretch reads MEGISIYTSDNYTEEIGSGDY. The Extracellular portion of the chain corresponds to 1 to 38; sequence MEGISIYTSDNYTEEIGSGDYDSIKEPCFREENAHFNR. Tyrosine 7 bears the Sulfotyrosine mark. An N-linked (GlcNAc...) asparagine glycan is attached at asparagine 11. Tyrosine 12 is subject to Sulfotyrosine. Serine 18 carries O-linked (Xyl...) (chondroitin sulfate) serine glycosylation. Tyrosine 21 is subject to Sulfotyrosine. 2 cysteine pairs are disulfide-bonded: cysteine 28/cysteine 274 and cysteine 109/cysteine 186. A helical transmembrane segment spans residues 39-63; the sequence is IFLPTIYSIIFLTGIVGNGLVILVM. At 64–77 the chain is on the cytoplasmic side; it reads GYQKKLRSMTDKYR. The chain crosses the membrane as a helical span at residues 78–99; the sequence is LHLSVADLLFVITLPFWAVDAV. The tract at residues 94-97 is chemokine binding; sequence WAVD. The Extracellular portion of the chain corresponds to 100-110; that stretch reads ANWYFGKFLCK. The helical transmembrane segment at 111-130 threads the bilayer; that stretch reads AVHVIYTVNLYSSVLILAFI. The chemokine binding stretch occupies residues 113–117; it reads HVIYT. Residues 131–154 lie on the Cytoplasmic side of the membrane; that stretch reads SLDRYLAIVHATNSQRPRKLLAEK. The short motif at 133-135 is the Important for signaling element; that stretch reads DRY. The tract at residues 135–147 is involved in dimerization; when bound to chemokine; sequence YLAIVHATNSQRP. The helical transmembrane segment at 155-174 threads the bilayer; it reads VVYVGVWIPALLLTIPDFIF. The Extracellular segment spans residues 175 to 195; it reads ANVSEADDRYICDRFYPNDLW. Positions 186 to 190 are chemokine binding, important for signaling; it reads CDRFY. The involved in dimerization stretch occupies residues 191–210; that stretch reads PNDLWVVVFQFQHIMVGLIL. Residues 196–216 form a helical membrane-spanning segment; it reads VVVFQFQHIMVGLILPGIVIL. The Cytoplasmic segment spans residues 217 to 241; it reads SCYCIIISKLSHSKGHQKRKALKTT. The chain crosses the membrane as a helical span at residues 242–261; sequence VILILAFFACWLPYYIGISI. Over 262-282 the chain is Extracellular; sequence DSFILLEIIRQGCEFENTVHK. Residues 266-268 form an involved in dimerization region; sequence LLE. Residues 283 to 302 traverse the membrane as a helical segment; the sequence is WISITEALAFFHCCLNPILY. Topologically, residues 303 to 352 are cytoplasmic; it reads AFLGAKFKTSAQHALTSVSRGSSLKILSKGKRGGHSSVSTESESSSFHSS. Phosphoserine occurs at positions 319 and 321. 2 positions are modified to phosphoserine; by PKC and GRK6: serine 324 and serine 325. The tract at residues 329 to 352 is disordered; the sequence is LSKGKRGGHSSVSTESESSSFHSS. Serine 330 carries the post-translational modification Phosphoserine; by GRK6. Lysine 331 is covalently cross-linked (Glycyl lysine isopeptide (Lys-Gly) (interchain with G-Cter in ubiquitin)). A compositionally biased stretch (low complexity) spans 337 to 352; it reads HSSVSTESESSSFHSS. Phosphoserine; by GRK6 is present on serine 339. 2 positions are modified to phosphoserine: serine 348 and serine 351.

Belongs to the G-protein coupled receptor 1 family. Monomer. Can form homodimers. Interacts with CD164. Interacts with ARRB2; the interaction is dependent on the C-terminal phosphorylation of CXCR4 and allows activation of MAPK1 and MAPK3. Interacts with ARR3; the interaction is dependent on the C-terminal phosphorylation of CXCR4 and modulates calcium mobilization. Interacts with RNF113A; the interaction, enhanced by CXCL12, promotes CXCR4 ubiquitination and subsequent degradation. Interacts (via the cytoplasmic C-terminal) with ITCH (via the WW domains I and II); the interaction, enhanced by CXCL12, promotes CXCR4 ubiquitination and leads to its degradation. Interacts with extracellular ubiquitin. Interacts with DBN1; this interaction is enhanced by antigenic stimulation. Following LPS binding, may form a complex with GDF5, HSP90AA1 and HSPA8. Post-translationally, phosphorylated on agonist stimulation. Rapidly phosphorylated on serine and threonine residues in the C-terminal. Phosphorylation at Ser-324 and Ser-325 leads to recruitment of ITCH, ubiquitination and protein degradation. Ubiquitinated after ligand binding, leading to its degradation. Ubiquitinated by ITCH at the cell membrane on agonist stimulation. The ubiquitin-dependent mechanism, endosomal sorting complex required for transport (ESCRT), then targets CXCR4 for lysosomal degradation. This process is dependent also on prior Ser-/Thr-phosphorylation in the C-terminal of CXCR4. Also binding of ARRB1 to STAM negatively regulates CXCR4 sorting to lysosomes though modulating ubiquitination of SFR5S. In terms of processing, sulfation is required for efficient binding of CXCL12/SDF-1alpha and promotes its dimerization. Post-translationally, O- and N-glycosylated. N-glycosylation can mask coreceptor function. The O-glycosylation chondroitin sulfate attachment does not affect interaction with CXCL12/SDF-1alpha nor its coreceptor activity.

The protein localises to the cell membrane. It is found in the cell junction. It localises to the early endosome. The protein resides in the late endosome. Its subcellular location is the lysosome. Its function is as follows. Receptor for the C-X-C chemokine CXCL12/SDF-1 that transduces a signal by increasing intracellular calcium ion levels and enhancing MAPK1/MAPK3 activation. Involved in the AKT signaling cascade. Plays a role in regulation of cell migration, e.g. during wound healing. Acts as a receptor for extracellular ubiquitin; leading to enhanced intracellular calcium ions and reduced cellular cAMP levels. Binds bacterial lipopolysaccharide (LPS) et mediates LPS-induced inflammatory response, including TNF secretion by monocytes. Involved in hematopoiesis and in cardiac ventricular septum formation. Also plays an essential role in vascularization of the gastrointestinal tract, probably by regulating vascular branching and/or remodeling processes in endothelial cells. Involved in cerebellar development. In the CNS, could mediate hippocampal-neuron survival. The sequence is that of C-X-C chemokine receptor type 4 (CXCR4) from Callithrix jacchus (White-tufted-ear marmoset).